The sequence spans 359 residues: MAGVACLGKTADADEWCDSGLGSLGPDAAAPGGPGLVAELSPELSWAPLVFGYVTEDGDTALHLAVIHQHEPFLDFLLGFSAGTEYLDLQNDLGQTALHLAAILGEASTVEKLYAAGAGVLVTERGGHTALHLACRVRAHTCAYVLLQPRPSHPRDASDTYLTQSQDHTPDTSHAPVATDPQPNPGNEEELRDEDWRLQLEAENYDGHTPLHVAVIHKDAEMVQLLRDAGADLNKPEPTCGRTPLHLAVEGQAAGVLALLLKAGADPTARMYGGRTPLGSALLRPNPVLARLLRAHGAPEPEDKDDKLSPCSNSSSDSDSDNRDEGDEYDDIVVHSRRSQNQPPPSPAAKPLPDDPNPA.

Phosphoserine; by RPS6KA1 occurs at positions 19 and 23. ANK repeat units lie at residues 57 to 86 (DGDT…GTEY), 93 to 122 (LGQT…GVLV), 126 to 155 (GGHT…SHPR), 206 to 235 (DGHT…DLNK), 240 to 269 (CGRT…DPTA), and 273 to 302 (GGRT…PEPE). Positions 153–192 (HPRDASDTYLTQSQDHTPDTSHAPVATDPQPNPGNEEELR) are disordered. Residues 298–308 (APEPEDKDDKL) are compositionally biased toward basic and acidic residues. Residues 298 to 359 (APEPEDKDDK…KPLPDDPNPA (62 aa)) are disordered. Serine 318 carries the post-translational modification Phosphoserine. Residues 318 to 331 (SDSDNRDEGDEYDD) are compositionally biased toward acidic residues. Pro residues predominate over residues 342–359 (QPPPSPAAKPLPDDPNPA).

Belongs to the NF-kappa-B inhibitor family. In terms of assembly, interacts with THRB (via ligand-binding domain). Interacts with RELA and REL. Interacts with COMMD1. Interacts with inhibitor kappa B-interacting Ras-like NKIRAS1 and NKIRAS2. In terms of processing, phosphorylated by RPS6KA1; followed by degradation. Interaction with NKIRAS1 and NKIRAS2 probably prevents phosphorylation.

The protein localises to the cytoplasm. Its subcellular location is the nucleus. Functionally, inhibits NF-kappa-B by complexing with and trapping it in the cytoplasm. However, the unphosphorylated form resynthesized after cell stimulation is able to bind NF-kappa-B allowing its transport to the nucleus and protecting it to further NFKBIA-dependent inactivation. Association with inhibitor kappa B-interacting NKIRAS1 and NKIRAS2 prevent its phosphorylation rendering it more resistant to degradation, explaining its slower degradation. The polypeptide is NF-kappa-B inhibitor beta (Nfkbib) (Rattus norvegicus (Rat)).